We begin with the raw amino-acid sequence, 393 residues long: Riboflavin biosynthesis protein RibBA (393 aa).

The DHBP synthase stretch occupies residues 1–200 (MQFDNIDSAL…IDDLIEYRKK (200 aa)). D-ribulose 5-phosphate contacts are provided by residues 27–28 (RE), Asp-32, 139–143 (RNGHT), and Glu-163. Residue Glu-28 coordinates Mg(2+). His-142 provides a ligand contact to Mg(2+). The GTP cyclohydrolase II stretch occupies residues 201 to 393 (LEPEIEFKAK…TKKIKMGHLI (193 aa)). Residue 249 to 253 (RLHSA) coordinates GTP. 3 residues coordinate Zn(2+): Cys-254, Cys-265, and Cys-267. GTP contacts are provided by residues Gln-270, 291–293 (EGR), and Thr-313. Asp-325 functions as the Proton acceptor; for GTP cyclohydrolase activity in the catalytic mechanism. Arg-327 functions as the Nucleophile; for GTP cyclohydrolase activity in the catalytic mechanism. Residues Ser-348 and Lys-353 each contribute to the GTP site.

The protein in the N-terminal section; belongs to the DHBP synthase family. This sequence in the C-terminal section; belongs to the GTP cyclohydrolase II family. Mg(2+) serves as cofactor. The cofactor is Mn(2+). Requires Zn(2+) as cofactor.

It carries out the reaction D-ribulose 5-phosphate = (2S)-2-hydroxy-3-oxobutyl phosphate + formate + H(+). The enzyme catalyses GTP + 4 H2O = 2,5-diamino-6-hydroxy-4-(5-phosphoribosylamino)-pyrimidine + formate + 2 phosphate + 3 H(+). The protein operates within cofactor biosynthesis; riboflavin biosynthesis; 2-hydroxy-3-oxobutyl phosphate from D-ribulose 5-phosphate: step 1/1. Its pathway is cofactor biosynthesis; riboflavin biosynthesis; 5-amino-6-(D-ribitylamino)uracil from GTP: step 1/4. Functionally, catalyzes the conversion of D-ribulose 5-phosphate to formate and 3,4-dihydroxy-2-butanone 4-phosphate. Its function is as follows. Catalyzes the conversion of GTP to 2,5-diamino-6-ribosylamino-4(3H)-pyrimidinone 5'-phosphate (DARP), formate and pyrophosphate. The polypeptide is Riboflavin biosynthesis protein RibBA (Staphylococcus aureus (strain MRSA252)).